The following is a 155-amino-acid chain: Protein FAM201A (155 aa).

The interval 130–155 (QDQGCGQHRPHSPRLVDIALPGGGWT) is disordered.

The protein is Protein FAM201A (FAM201A) of Homo sapiens (Human).